We begin with the raw amino-acid sequence, 352 residues long: Holliday junction branch migration complex subunit RuvB (352 aa).

Positions 4–191 (TDKLAAPARV…FGIVARLEFY (188 aa)) are large ATPase domain (RuvB-L). ATP contacts are provided by residues Leu-30, Arg-31, Gly-72, Lys-75, Thr-76, Thr-77, 138–140 (EDY), Arg-181, Tyr-191, and Arg-228. Thr-76 provides a ligand contact to Mg(2+). The segment at 192 to 262 (TADELARIVT…MADAALAMLD (71 aa)) is small ATPAse domain (RuvB-S). The tract at residues 265-352 (SVGFDLMDRK…SGASELFGDA (88 aa)) is head domain (RuvB-H). Arg-301, Arg-320, and Arg-325 together coordinate DNA.

Belongs to the RuvB family. In terms of assembly, homohexamer. Forms an RuvA(8)-RuvB(12)-Holliday junction (HJ) complex. HJ DNA is sandwiched between 2 RuvA tetramers; dsDNA enters through RuvA and exits via RuvB. An RuvB hexamer assembles on each DNA strand where it exits the tetramer. Each RuvB hexamer is contacted by two RuvA subunits (via domain III) on 2 adjacent RuvB subunits; this complex drives branch migration. In the full resolvosome a probable DNA-RuvA(4)-RuvB(12)-RuvC(2) complex forms which resolves the HJ.

Its subcellular location is the cytoplasm. The catalysed reaction is ATP + H2O = ADP + phosphate + H(+). The RuvA-RuvB-RuvC complex processes Holliday junction (HJ) DNA during genetic recombination and DNA repair, while the RuvA-RuvB complex plays an important role in the rescue of blocked DNA replication forks via replication fork reversal (RFR). RuvA specifically binds to HJ cruciform DNA, conferring on it an open structure. The RuvB hexamer acts as an ATP-dependent pump, pulling dsDNA into and through the RuvAB complex. RuvB forms 2 homohexamers on either side of HJ DNA bound by 1 or 2 RuvA tetramers; 4 subunits per hexamer contact DNA at a time. Coordinated motions by a converter formed by DNA-disengaged RuvB subunits stimulates ATP hydrolysis and nucleotide exchange. Immobilization of the converter enables RuvB to convert the ATP-contained energy into a lever motion, pulling 2 nucleotides of DNA out of the RuvA tetramer per ATP hydrolyzed, thus driving DNA branch migration. The RuvB motors rotate together with the DNA substrate, which together with the progressing nucleotide cycle form the mechanistic basis for DNA recombination by continuous HJ branch migration. Branch migration allows RuvC to scan DNA until it finds its consensus sequence, where it cleaves and resolves cruciform DNA. This Cupriavidus necator (strain ATCC 17699 / DSM 428 / KCTC 22496 / NCIMB 10442 / H16 / Stanier 337) (Ralstonia eutropha) protein is Holliday junction branch migration complex subunit RuvB.